Reading from the N-terminus, the 831-residue chain is Zinc transporter ZIP10 (831 aa).

The signal sequence occupies residues 1–25; sequence MKVHMHTKFCLICLLTFIFHHCNHC. Residues 126–318 are disordered; the sequence is HNHQHSHNHL…RKREAPHVKN (193 aa). Residues 138-147 are compositionally biased toward polar residues; the sequence is ENQTVTSVST. Asparagine 139 carries an N-linked (GlcNAc...) asparagine glycan. Residues 152–171 show a composition bias toward basic and acidic residues; that stretch reads KCDPEKETVEVSVKSDDKHM. A compositionally biased stretch (basic residues) spans 172–188; that stretch reads HDHNHRLRHHHRLHHHL. Residues 189–198 show a composition bias toward basic and acidic residues; it reads DHNNTHHFHN. Asparagine 198 and asparagine 218 each carry an N-linked (GlcNAc...) asparagine glycan. Residues 211–221 are compositionally biased toward polar residues; it reads NEPSTETNKTQ. Residues 229–238 are compositionally biased toward basic residues; it reads PKGKRKKKGR. Composition is skewed to basic and acidic residues over residues 256–273 and 281–315; these read DQGE…DRVH and HLPE…EAPH. Residue asparagine 339 is glycosylated (N-linked (GlcNAc...) asparagine). 2 consecutive transmembrane segments (helical) span residues 411–431 and 438–458; these read IISI…VPII and FLLT…ALLH. The segment at 464–484 is disordered; it reads QGGHDHSHQHAHGHGHSHGHE. Residues 495 to 515 traverse the membrane as a helical segment; it reads VLKGLVALGGIYLLFIIEHCI. A phosphothreonine mark is found at threonine 536 and threonine 553. Serine 591 bears the Phosphoserine mark. Helical transmembrane passes span 687–707, 732–752, 759–779, and 801–821; these read AIGA…IAVF, IVYN…GTAV, ITLW…LVDM, and FILQ…IALY.

It belongs to the ZIP transporter (TC 2.A.5) family. In terms of assembly, interacts with SLC39A6; which triggers cells to undergo EMT and mitosis. Found in a complex with SLC39A6, SLC39A10 and with the 'Ser-727' phosphorylated form of STAT3 throughout mitosis. Found in a complex with SLC39A6, SLC39A10 and with NCAM1; this complex controls NCAM1 phosphorylation and integration into focal adhesion complexes during epithelial-tomesenchymal transition. Found in a complex with SLC39A6, SLC39A10 and with GSK3B that controls NCAM1 phosphorylation. Undergoes N-terminal ectodomain shedding.

It is found in the cell membrane. The protein localises to the apical cell membrane. The catalysed reaction is Zn(2+)(in) = Zn(2+)(out). Its function is as follows. Zinc-influx transporter. When associated with SLC39A6, the heterodimer formed by SLC39A10 and SLC39A6 mediates cellular zinc uptake to trigger cells to undergo epithelial-to-mesenchymal transition (EMT). SLC39A10-SLC39A6 heterodimers play also an essentiel role in initiating mitosis by importing zinc into cells to initiate a pathway resulting in the onset of mitosis. Plays an important for both mature B-cell maintenance and humoral immune responses. When associated with SLC39A10, the heterodimer controls NCAM1 phosphorylation and integration into focal adhesion complexes during EMT. In Homo sapiens (Human), this protein is Zinc transporter ZIP10.